The primary structure comprises 216 residues: Flavin prenyltransferase UbiX (216 aa).

FMN contacts are provided by residues G9–S11, S35, and R144. Y174 and R190 together coordinate dimethylallyl phosphate.

The protein belongs to the UbiX/PAD1 family.

The catalysed reaction is dimethylallyl phosphate + FMNH2 = prenylated FMNH2 + phosphate. Functionally, flavin prenyltransferase that catalyzes the synthesis of the prenylated FMN cofactor (prenyl-FMN) for 4-hydroxy-3-polyprenylbenzoic acid decarboxylase UbiD. The prenyltransferase is metal-independent and links a dimethylallyl moiety from dimethylallyl monophosphate (DMAP) to the flavin N5 and C6 atoms of FMN. The protein is Flavin prenyltransferase UbiX of Streptomyces coelicolor (strain ATCC BAA-471 / A3(2) / M145).